Here is a 114-residue protein sequence, read N- to C-terminus: Ferredoxin (114 aa).

Positions 9 and 17 each coordinate [3Fe-4S] cluster. 4 residues coordinate [4Fe-4S] cluster: Cys21, Cys40, Cys43, and Cys46. In terms of domain architecture, 4Fe-4S ferredoxin-type spans 31-60 (RMLYINPDECVDCGACKPACRVEAIYWEGD). Cys50 contacts [3Fe-4S] cluster.

The cofactor is [4Fe-4S] cluster. [3Fe-4S] cluster serves as cofactor.

Ferredoxins are iron-sulfur proteins that transfer electrons in a wide variety of metabolic reactions. This chain is Ferredoxin (fdxA), found in Mycobacterium tuberculosis (strain ATCC 25618 / H37Rv).